The following is a 323-amino-acid chain: Macrolide efflux protein A (323 aa).

The next 9 helical transmembrane spans lie at 6-26, 51-71, 105-125, 128-148, 182-202, 219-239, 245-265, 270-290, and 303-323; these read VLSMSLLGFLPYAVFGPAIGV, LTIVAFYMELPVWMVMIVLFI, SLQSISYIVSPAVAALLYSVW, NAIIAIDVLGAVIASITVLIV, FALLLVGTLYMFVYMPINALF, ITEISFASGMLIGGLLLGLFG, ILLITASIFMMGISLTISGLL, FFIFVVCSAIMGLSVPFYSGV, and YLGRVFSLTGSIMSLAMPIGL.

It belongs to the major facilitator superfamily. Drug:H(+) antiporter-3 (DHA3) (TC 2.A.1.21) family.

The protein resides in the cell membrane. Functionally, confers resistance to 14-membered macrolides including erythromycin and to 15-membered macrolides but not to 16-membered macrolides, lincosamides or analogs of streptogramin B. May function as an efflux pump to regulate intracellular macrolide levels. In Enterococcus faecalis (Streptococcus faecalis), this protein is Macrolide efflux protein A (mefA).